The primary structure comprises 194 residues: Fe/S biogenesis protein NfuA (194 aa).

Residues Cys-152 and Cys-155 each coordinate [4Fe-4S] cluster.

This sequence belongs to the NfuA family. Homodimer. The cofactor is [4Fe-4S] cluster.

Its function is as follows. Involved in iron-sulfur cluster biogenesis. Binds a 4Fe-4S cluster, can transfer this cluster to apoproteins, and thereby intervenes in the maturation of Fe/S proteins. Could also act as a scaffold/chaperone for damaged Fe/S proteins. The protein is Fe/S biogenesis protein NfuA of Pseudomonas fluorescens (strain Pf0-1).